Consider the following 60-residue polypeptide: Cytotoxin 10 (60 aa).

Intrachain disulfides connect cysteine 3–cysteine 21, cysteine 14–cysteine 38, cysteine 42–cysteine 53, and cysteine 54–cysteine 59.

The protein belongs to the three-finger toxin family. Short-chain subfamily. Type IA cytotoxin sub-subfamily. Monomer in solution; Homodimer and oligomer in the presence of negatively charged lipids forming a pore with a size ranging between 20 and 30 Angstroms. As to expression, expressed by the venom gland.

It localises to the secreted. Its subcellular location is the target cell membrane. In terms of biological role, shows cytolytic activity on many different cells by forming pore in lipid membranes. In vivo, increases heart rate or kills the animal by cardiac arrest. In addition, it binds to heparin with high affinity, interacts with Kv channel-interacting protein 1 (KCNIP1) in a calcium-independent manner, and binds to integrin alpha-V/beta-3 (ITGAV/ITGB3) with moderate affinity. Has hemolytic activity towards human erythrocytes (EC(50)=0.162 uM) and cytolytic activity towards various cell lines. This chain is Cytotoxin 10, found in Naja naja (Indian cobra).